The sequence spans 671 residues: APC membrane recruitment protein 2 (671 aa).

Disordered regions lie at residues 1-24, 76-358, 391-414, and 444-598; these read METS…ASVG, SGGT…SDPS, EAGP…KNPG, and SQTE…PLRT. Gly residues-rich tracts occupy residues 7–21 and 126–137; these read RGGG…GAGA and GGDSGGGGGGRP. Position 162 is a phosphoserine (serine 162). A compositionally biased stretch (basic and acidic residues) spans 171-182; it reads GRSENGKGEPVD. Phosphoserine occurs at positions 229 and 233. Basic and acidic residues-rich tracts occupy residues 236-260, 276-286, and 295-307; these read CVKE…RDPA, APARSCREAEG, and ARGE…RRAE. Positions 342-353 are enriched in low complexity; sequence APAAPDPASVDP. Phosphoserine occurs at positions 355 and 358. Positions 447–458 are enriched in low complexity; sequence EEQGPEPQEGAA. Basic and acidic residues-rich tracts occupy residues 472–487 and 498–514; these read TPKD…DASS and IEPH…KEQQ.

The protein belongs to the Amer family. Interacts with APC.

The protein localises to the cell membrane. Functionally, negative regulator of the canonical Wnt signaling pathway involved in neuroectodermal patterning. Acts by specifically binding phosphatidylinositol 4,5-bisphosphate (PtdIns(4,5)P2), translocating to the cell membrane and interacting with key regulators of the canonical Wnt signaling pathway, such as components of the beta-catenin destruction complex. The chain is APC membrane recruitment protein 2 (AMER2) from Homo sapiens (Human).